The sequence spans 210 residues: Dephospho-CoA kinase (210 aa).

Positions 4 to 202 constitute a DPCK domain; it reads WVGLTGGIGS…AFYSGIFASK (199 aa). 12-17 lines the ATP pocket; the sequence is GSGKSA.

Belongs to the CoaE family.

Its subcellular location is the cytoplasm. The catalysed reaction is 3'-dephospho-CoA + ATP = ADP + CoA + H(+). Its pathway is cofactor biosynthesis; coenzyme A biosynthesis; CoA from (R)-pantothenate: step 5/5. Its function is as follows. Catalyzes the phosphorylation of the 3'-hydroxyl group of dephosphocoenzyme A to form coenzyme A. The protein is Dephospho-CoA kinase of Neisseria gonorrhoeae (strain ATCC 700825 / FA 1090).